A 1062-amino-acid chain; its full sequence is Probable sucrose-phosphate synthase 3 (1062 aa).

A compositionally biased stretch (basic and acidic residues) spans 113–122 (EREQGRRDAT). The disordered stretch occupies residues 113 to 141 (EREQGRRDATEDLSEDLSEGEKGDGLGEI). A phosphoserine mark is found at Ser126, Ser130, and Ser156. The disordered stretch occupies residues 715 to 735 (MDGDKPSLNGSLEPNSADPVK).

This sequence belongs to the glycosyltransferase 1 family. Homodimer or homotetramer.

It carries out the reaction beta-D-fructose 6-phosphate + UDP-alpha-D-glucose = sucrose 6(F)-phosphate + UDP + H(+). It functions in the pathway glycan biosynthesis; sucrose biosynthesis; sucrose from D-fructose 6-phosphate and UDP-alpha-D-glucose: step 1/2. Its activity is regulated as follows. Activity is regulated by phosphorylation and moderated by concentration of metabolites and light. In terms of biological role, plays a role in photosynthetic sucrose synthesis by catalyzing the rate-limiting step of sucrose biosynthesis from UDP-glucose and fructose- 6-phosphate. Involved in the regulation of carbon partitioning in the leaves of plants. May regulate the synthesis of sucrose and therefore play a major role as a limiting factor in the export of photoassimilates out of the leaf. Plays a role for sucrose availability that is essential for plant growth and fiber elongation. This is Probable sucrose-phosphate synthase 3 (SPS3) from Arabidopsis thaliana (Mouse-ear cress).